The chain runs to 400 residues: Probable aspartate/prephenate aminotransferase (400 aa).

3 residues coordinate L-aspartate: glycine 39, tryptophan 125, and asparagine 175. Lysine 239 is modified (N6-(pyridoxal phosphate)lysine). Residue arginine 375 coordinates L-aspartate.

This sequence belongs to the class-I pyridoxal-phosphate-dependent aminotransferase family. In terms of assembly, homodimer. The cofactor is pyridoxal 5'-phosphate.

It is found in the cytoplasm. It carries out the reaction L-aspartate + 2-oxoglutarate = oxaloacetate + L-glutamate. The catalysed reaction is L-arogenate + 2-oxoglutarate = prephenate + L-glutamate. Functionally, catalyzes the reversible conversion of aspartate and 2-oxoglutarate to glutamate and oxaloacetate. Can also transaminate prephenate in the presence of glutamate. The sequence is that of Probable aspartate/prephenate aminotransferase (aspC) from Rhizobium leguminosarum bv. phaseoli.